Consider the following 726-residue polypeptide: Methionine--tRNA ligase (726 aa).

A 'HIGH' region motif is present at residues 12-22 (PYVNNIPHLGN). The Zn(2+) site is built by Cys-143, Cys-146, Cys-155, and Cys-158. A 'KMSKS' region motif is present at residues 330 to 334 (KFSKS). Lys-333 provides a ligand contact to ATP. Residues 562 to 667 (FSEKVCLKVV…DNPIPGERII (106 aa)) form the tRNA-binding domain.

This sequence belongs to the class-I aminoacyl-tRNA synthetase family. MetG type 1 subfamily. As to quaternary structure, homodimer. The cofactor is Zn(2+).

It localises to the cytoplasm. The catalysed reaction is tRNA(Met) + L-methionine + ATP = L-methionyl-tRNA(Met) + AMP + diphosphate. Is required not only for elongation of protein synthesis but also for the initiation of all mRNA translation through initiator tRNA(fMet) aminoacylation. This chain is Methionine--tRNA ligase, found in Borrelia turicatae (strain 91E135).